The chain runs to 565 residues: MGDLLSNSEFFKKLGVDSSNQWILYDEQMEMFFKFLSGNITDANILTERQVLEREEMQRRGEWLSASDRELKLLQIEAESPGLLNYKQQDVDALTMSIEAIEDASRDYATLLEDMMTTKHSITKHLGEVECVTAELQLREKDLIAECQSKAKQLEELQQENCRLSAEAKKAFTAPQLPPLFMHQLPLEQYFHKCDSFMQYFTLYVKENFKIQDYDEFQSAEEDLGREKAKLEDLERGIQFYALSYIRTKAKVKATQCLIDQLDLGKIHCLSLTDMAREMHDLQLLNDYQLSNTHDTLLNDLTIHIQQHTQRRIELVLYENTKLKLERAVRRHESDKKLTKIISDALSNAELLWIAIQLDCDKKRNCLDTSEELRDQAQATWQRIQTMRSINASYQGICAQFVQEIANLLSAHLGQNIKATEAKACLFEYEKFGRLLSYSFQSMLNRKSCAAVQDQLAELKRLEQTLRPFVYDSPLEQPMFENVRYLSAIYNVTQQQTRLDESGRSLRKDFLENVVGRIERDKLYRYSVVLWIWFLTEPQRMMHAIDEVKKAAAAVIRPGGGLHRK.

2 coiled-coil regions span residues 135–171 (ELQLREKDLIAECQSKAKQLEELQQENCRLSAEAKKA) and 212–241 (QDYDEFQSAEEDLGREKAKLEDLERGIQFY).

The protein belongs to the HAUS3 family. Component of the augmin complex composed of dgt2, dgt3, dgt4, dgt5, dgt6, msd1, msd5 and wac. The complex interacts directly or indirectly with microtubules and is required for centrosome-independent generation of spindle microtubules.

It is found in the cytoplasm. The protein resides in the cytoskeleton. Its subcellular location is the spindle. Its function is as follows. As part of the augmin complex, plays a role in centrosome-independent generation of spindle microtubules. The complex is required for mitotic spindle assembly through its involvement in localizing gamma-tubulin to spindle microtubules. The polypeptide is Augmin complex subunit dgt3 (Drosophila melanogaster (Fruit fly)).